Reading from the N-terminus, the 94-residue chain is DNA-directed RNA polymerase subunit omega (94 aa).

This sequence belongs to the RNA polymerase subunit omega family. As to quaternary structure, the RNAP catalytic core consists of 2 alpha, 1 beta, 1 beta' and 1 omega subunit. When a sigma factor is associated with the core the holoenzyme is formed, which can initiate transcription.

The catalysed reaction is RNA(n) + a ribonucleoside 5'-triphosphate = RNA(n+1) + diphosphate. Functionally, promotes RNA polymerase assembly. Latches the N- and C-terminal regions of the beta' subunit thereby facilitating its interaction with the beta and alpha subunits. This chain is DNA-directed RNA polymerase subunit omega, found in Limosilactobacillus fermentum (strain NBRC 3956 / LMG 18251) (Lactobacillus fermentum).